Here is a 254-residue protein sequence, read N- to C-terminus: Proteasome subunit alpha (254 aa).

The tract at residues P232–S254 is disordered.

Belongs to the peptidase T1A family. In terms of assembly, the 20S proteasome core is composed of 14 alpha and 14 beta subunits that assemble into four stacked heptameric rings, resulting in a barrel-shaped structure. The two inner rings, each composed of seven catalytic beta subunits, are sandwiched by two outer rings, each composed of seven alpha subunits. The catalytic chamber with the active sites is on the inside of the barrel. Has a gated structure, the ends of the cylinder being occluded by the N-termini of the alpha-subunits. Is capped by the proteasome-associated ATPase, ARC.

The protein localises to the cytoplasm. The protein operates within protein degradation; proteasomal Pup-dependent pathway. The formation of the proteasomal ATPase ARC-20S proteasome complex, likely via the docking of the C-termini of ARC into the intersubunit pockets in the alpha-rings, may trigger opening of the gate for substrate entry. Interconversion between the open-gate and close-gate conformations leads to a dynamic regulation of the 20S proteasome proteolysis activity. Component of the proteasome core, a large protease complex with broad specificity involved in protein degradation. The chain is Proteasome subunit alpha from Mycolicibacterium vanbaalenii (strain DSM 7251 / JCM 13017 / BCRC 16820 / KCTC 9966 / NRRL B-24157 / PYR-1) (Mycobacterium vanbaalenii).